The sequence spans 130 residues: Small ribosomal subunit protein uS9 (130 aa).

The segment at 98-130 (LKRAGLLTRDPRMKERKKPGLKKARRSPQFSKR) is disordered. Basic residues predominate over residues 111-130 (KERKKPGLKKARRSPQFSKR).

This sequence belongs to the universal ribosomal protein uS9 family.

The sequence is that of Small ribosomal subunit protein uS9 from Staphylococcus epidermidis (strain ATCC 35984 / DSM 28319 / BCRC 17069 / CCUG 31568 / BM 3577 / RP62A).